The primary structure comprises 608 residues: Chaperone protein HtpG (608 aa).

Residues 1 to 332 form an a; substrate-binding region; it reads MQFQTEVNQL…VEDLPLNVSR (332 aa). Positions 333 to 536 are b; the sequence is EILQENQILK…KNKPDFAMQQ (204 aa). Residues 537-608 form a c region; that stretch reads LLKQMGQEQN…LTKIINKAFS (72 aa).

This sequence belongs to the heat shock protein 90 family. In terms of assembly, homodimer.

It localises to the cytoplasm. Functionally, molecular chaperone. Has ATPase activity. The polypeptide is Chaperone protein HtpG (Campylobacter jejuni subsp. jejuni serotype O:23/36 (strain 81-176)).